Consider the following 352-residue polypeptide: Chorismate synthase (352 aa).

Position 48 (R48) interacts with NADP(+). FMN-binding positions include 125–127, 238–239, G278, 293–297, and R319; these read RSS, NA, and KPTSS.

The protein belongs to the chorismate synthase family. As to quaternary structure, homotetramer. FMNH2 is required as a cofactor.

The catalysed reaction is 5-O-(1-carboxyvinyl)-3-phosphoshikimate = chorismate + phosphate. Its pathway is metabolic intermediate biosynthesis; chorismate biosynthesis; chorismate from D-erythrose 4-phosphate and phosphoenolpyruvate: step 7/7. Functionally, catalyzes the anti-1,4-elimination of the C-3 phosphate and the C-6 proR hydrogen from 5-enolpyruvylshikimate-3-phosphate (EPSP) to yield chorismate, which is the branch point compound that serves as the starting substrate for the three terminal pathways of aromatic amino acid biosynthesis. This reaction introduces a second double bond into the aromatic ring system. The chain is Chorismate synthase from Legionella pneumophila (strain Paris).